Consider the following 123-residue polypeptide: MAWTPLLLLLLSHCTGSLSQPVLTQPTSLSASPGASARFTCTLRSGINVGTYRIYWYQQKPGSLPRYLLRYKSDSDKQQGSGVPSRFSGSKDASTNAGLLLISGLQSEDEADYYCAIWYSSTS.

The signal sequence occupies residues 1 to 19; that stretch reads MAWTPLLLLLLSHCTGSLS. The segment at 20–44 is framework-1; the sequence is QPVLTQPTSLSASPGASARFTCTLR. The region spanning 21 to 123 is the Ig-like domain; that stretch reads PVLTQPTSLS…YCAIWYSSTS (103 aa). Residues cysteine 41 and cysteine 115 are joined by a disulfide bond. Residues 45–53 are complementarity-determining-1; the sequence is SGINVGTYR. The framework-2 stretch occupies residues 54–70; it reads IYWYQQKPGSLPRYLLR. A complementarity-determining-2 region spans residues 71–77; that stretch reads YKSDSDK. The framework-3 stretch occupies residues 78–115; the sequence is QQGSGVPSRFSGSKDASTNAGLLLISGLQSEDEADYYC. The tract at residues 116–123 is complementarity-determining-3; it reads AIWYSSTS.

As to quaternary structure, immunoglobulins are composed of two identical heavy chains and two identical light chains; disulfide-linked.

It localises to the secreted. It is found in the cell membrane. V region of the variable domain of immunoglobulin light chains that participates in the antigen recognition. Immunoglobulins, also known as antibodies, are membrane-bound or secreted glycoproteins produced by B lymphocytes. In the recognition phase of humoral immunity, the membrane-bound immunoglobulins serve as receptors which, upon binding of a specific antigen, trigger the clonal expansion and differentiation of B lymphocytes into immunoglobulins-secreting plasma cells. Secreted immunoglobulins mediate the effector phase of humoral immunity, which results in the elimination of bound antigens. The antigen binding site is formed by the variable domain of one heavy chain, together with that of its associated light chain. Thus, each immunoglobulin has two antigen binding sites with remarkable affinity for a particular antigen. The variable domains are assembled by a process called V-(D)-J rearrangement and can then be subjected to somatic hypermutations which, after exposure to antigen and selection, allow affinity maturation for a particular antigen. The sequence is that of Immunoglobulin lambda variable 5-39 from Homo sapiens (Human).